The chain runs to 1057 residues: Nuclear RNAi defective-3 protein (1057 aa).

Disordered regions lie at residues 1–89 and 344–388; these read MDLL…GLSV and LTNS…ERTV. Residues 17–30 are compositionally biased toward low complexity; it reads STAKKPATSASSTP. 2 stretches are compositionally biased toward basic and acidic residues: residues 67 to 81 and 356 to 388; these read PKREHTDRTGPDPKR and GGRERRDGGGNSRKYDDRRSPRDGEIDYDERTV. A PAZ domain is found at 387 to 500; that stretch reads TVSHYQRQFQ…YPMELMSILP (114 aa). The 325-residue stretch at 677–1001 folds into the Piwi domain; sequence GIIAEKRPDM…LAKRGHNNYK (325 aa).

The protein localises to the cytoplasm. The protein resides in the nucleus. Functionally, transports small interfering RNAs (siRNAs) from the cytoplasm to the nucleus. Required for RNA interference (RNAi) in nuclei. Required for exogenous RNAi-induced H3K27 methylation. This is Nuclear RNAi defective-3 protein (nrde-3) from Caenorhabditis elegans.